The primary structure comprises 341 residues: uncharacterized protein (341 aa).

4 WD repeats span residues 19-59 (SLGS…QVHT), 106-145 (GHTD…RCLG), 252-293 (PFSN…HHKG), and 303-341 (VSQS…ALTS).

It is found in the cytoplasm. The protein resides in the nucleus. This is an uncharacterized protein from Schizosaccharomyces pombe (strain 972 / ATCC 24843) (Fission yeast).